We begin with the raw amino-acid sequence, 291 residues long: MLVRSFLGFAVLAATCLAASLQEVTEFGDNPTNIQMYIYVPDQLDTNPPVIVALHPCGGSAQQWFSGTQLPSYADDNGFILIYPSTPHMSNCWDIQNPDTLTHGQGGDALGIVSMVNYTLDKHSGDSSRVYAMGFSSGGMMTNQLAGSYPDVFEAGAVYSGVAFGCAAGAESATPFSPNQTCAQGLQKTAQEWGDFVRNAYAGYTGRRPRMQIFHGLEDTLVRPQCAEEALKQWSNVLGVELTQEVSGVPSPGWTQKIYGDGTQLQGFFGQGIGHQSTVNEQQLLQWFGLI.

Residues 1–18 (MLVRSFLGFAVLAATCLA) form the signal peptide. N-linked (GlcNAc...) asparagine glycosylation occurs at N117. The Charge relay system role is filled by S136. N-linked (GlcNAc...) asparagine glycosylation occurs at N179.

Belongs to the carbohydrate esterase 1 (CE1) family. Feruloyl esterase type B subfamily.

It is found in the secreted. It carries out the reaction feruloyl-polysaccharide + H2O = ferulate + polysaccharide.. Its function is as follows. Feruloyl esterase which acts in synergy with xylanases in degradation of plant cell walls. Hydrolyzes the ester linkage of hydroxycinnamic acids (ferulic acid (FA) and p-coumaric acid) and diferulates present in plant cell walls. Is active on substrates containing ferulic acid ester linked to the C-5 and C-2 linkages of arabinofuranose, while it was found capable of de-esterifying acetylated glucuronoxylans. Efficiently releases ferulic acid (FA) from destarched wheat bran when incubated with an M3 xylanase. In Thermothelomyces thermophilus (strain ATCC 42464 / BCRC 31852 / DSM 1799) (Sporotrichum thermophile), this protein is Feruloyl esterase B (Fae1a).